Reading from the N-terminus, the 361-residue chain is Chorismate synthase (361 aa).

Residues Arg-48 and Arg-54 each coordinate NADP(+). Residues 125 to 127 (RSS), 238 to 239 (NA), Gly-278, 293 to 297 (KPTSS), and Arg-319 contribute to the FMN site.

This sequence belongs to the chorismate synthase family. As to quaternary structure, homotetramer. It depends on FMNH2 as a cofactor.

The catalysed reaction is 5-O-(1-carboxyvinyl)-3-phosphoshikimate = chorismate + phosphate. The protein operates within metabolic intermediate biosynthesis; chorismate biosynthesis; chorismate from D-erythrose 4-phosphate and phosphoenolpyruvate: step 7/7. Its function is as follows. Catalyzes the anti-1,4-elimination of the C-3 phosphate and the C-6 proR hydrogen from 5-enolpyruvylshikimate-3-phosphate (EPSP) to yield chorismate, which is the branch point compound that serves as the starting substrate for the three terminal pathways of aromatic amino acid biosynthesis. This reaction introduces a second double bond into the aromatic ring system. This chain is Chorismate synthase, found in Cronobacter sakazakii (strain ATCC BAA-894) (Enterobacter sakazakii).